A 435-amino-acid polypeptide reads, in one-letter code: Membrane-bound ghrelin O-acyltransferase MBOAT4 (435 aa).

Topologically, residues 1–5 (MDWLQ) are lumenal. The chain crosses the membrane as a helical span at residues 6–26 (LFFLHPLSFYQGAAFPFALLF). Over 27-40 (NYLCILDTFSTRAR) the chain is Cytoplasmic. A helical transmembrane segment spans residues 41-56 (YLFLLAGGGVLAFAAM). Residues 57–59 (GPY) lie on the Lumenal side of the membrane. The helical transmembrane segment at 60 to 76 (SLLIFIPALCAVALVSF) threads the bilayer. At 77 to 82 (LSPQEV) the chain is on the cytoplasmic side. Residues 83–101 (HRLTFFFQMGWQTLCHLGL) form a helical membrane-spanning segment. At 102–120 (HYTEYYLGEPPPVRFYITL) the chain is on the lumenal side. Residues 121–136 (SSLMLLTQRVTSLSLD) form a helical membrane-spanning segment. Residues 137-206 (ICEGKVEAPR…YPSISFRALT (70 aa)) lie on the Cytoplasmic side of the membrane. The helical transmembrane segment at 207-227 (WRGLQILGLECLKVALRSAVS) threads the bilayer. Residues 228–240 (AGAGLDDCQRLEC) lie on the Lumenal side of the membrane. The chain crosses the membrane as a helical span at residues 241–261 (IYLMWSTAWLFKLTYYSHWIL). Topologically, residues 262–324 (DDSLLHAAGF…RRLVFRKSRR (63 aa)) are cytoplasmic. Residues asparagine 307 and histidine 338 contribute to the active site. The helical transmembrane segment at 325-338 (WPLLQTFAFSAWWH) threads the bilayer. Residues 339–340 (GL) lie on the Lumenal side of the membrane. A helical transmembrane segment spans residues 341–357 (HPGQVFGFLCWSVMVKA). Over 358–376 (DYLIHTFANVCIRSWPLRL) the chain is Cytoplasmic. A helical transmembrane segment spans residues 377–397 (LYRALTWAHTQLIIAYIMLAV). The Lumenal segment spans residues 398–407 (EGRSLSSLCQ). A helical transmembrane segment spans residues 408–428 (LCCSYNSLFPVMYGLLLFLLA). The Cytoplasmic segment spans residues 429-435 (ERKDKRN).

The protein belongs to the membrane-bound acyltransferase family. Monomer. Not glycosylated. Highly expressed in stomach and pancreas. Lower expression in small intestine and colon. Very low expression in testis.

It is found in the endoplasmic reticulum membrane. It carries out the reaction octanoyl-CoA + L-seryl-[protein] = O-octanoyl-L-seryl-[protein] + CoA. It catalyses the reaction hexanoyl-CoA + L-seryl-[protein] = O-hexanoyl-L-seryl-[protein] + CoA. The catalysed reaction is decanoyl-CoA + L-seryl-[protein] = O-decanoyl-L-seryl-[protein] + CoA. The enzyme catalyses L-seryl-[protein] + acetyl-CoA = O-acetyl-L-seryl-[protein] + CoA. It carries out the reaction L-seryl-[protein] + butanoyl-CoA = O-butanoyl-L-seryl-[protein] + CoA. It catalyses the reaction pentanoyl-CoA + L-seryl-[protein] = O-pentanoyl-L-seryl-[protein] + CoA. The catalysed reaction is heptanoyl-CoA + L-seryl-[protein] = O-heptanoyl-L-seryl-[protein] + CoA. The enzyme catalyses nonanoyl-CoA + L-seryl-[protein] = O-nonanoyl-L-seryl-[protein] + CoA. It carries out the reaction L-seryl-[protein] + dodecanoyl-CoA = O-dodecanoyl-L-seryl-[protein] + CoA. It catalyses the reaction L-seryl-[protein] + tetradecanoyl-CoA = O-tetradecanoyl-L-seryl-[protein] + CoA. The catalysed reaction is a fatty acyl-CoA + L-seryl-[protein] = O-fatty acyl-L-seryl-[protein] + CoA. With respect to regulation, inhibited by 1-[2-cyano-3,12-dioxooleana-1,9(11)- dien-28-oyl]ethylamide (CDDO-EA) with an IC(50) of 60 uM. Inhibited by Fe3+ and Cu2+ and the O-acyltransferase activity is completely blocked over 5 mM Fe3+ and 0.5 mM Cu2+. Catalyzes ghrelin acylation at 'Ser-3' using preferentially octanoyl-CoA, hexanoyl-CoA and decanoyl-CoA as acyl-CoA donors leading to ghrelin activity. In vitro also uses acyl-CoA donors of different lengths from short-chain (C2) to long-chain fatty acids (C16) knowing that acyl-CoA donors from butanoyl-CoA (C4) to dodecanoyl-CoA (C12) are more efficient compared to longer acyl-CoA donors, such as myristoyl-CoA (C14) and palmitoyl-CoA (C16) that are not efficient. In terms of biological role, inactive octanoyltransferase activity. In Mus musculus (Mouse), this protein is Membrane-bound ghrelin O-acyltransferase MBOAT4.